Here is a 472-residue protein sequence, read N- to C-terminus: MAETDVGSVKGKEKGSGKRWILLIGAIAAVLLAVVVAVFLNTQNSSISEFTGKICNCRQAEQQKYIGIVEDCCCDYETVNRLNTEVLNPLLQDLVKTPFYRYFKVKLWCDCPFWPDDGMCRLRDCSVCECPESEFPEVFKKPLSQYNPVCQEGKPQATVDRTLDTRAFRGWTVTDNPWTSDDETDNDEMTYVNLRLNPERYTGYIGPSARRIWEAIYSENCPKHTSEGSCQEEKILYKLVSGLHSSISVHIASDYLLDEATNLWGQNLTLLYDRVLRYPDRVQNLYFTFLFVLRAVTKAEDYLGEAEYETGNVIEDLKTKSLVKQVVSDPKTKAACPVPFDEAKLWKGQRGPELKQQLEKQFRNISAIMDCVGCEKCRLWGKLQILGLGTALKILFTVNGEDNLRHNLELQRNEVIALMNLLHRLSESVKYVHDMSPAAERIAGGHASSGNSFWQRIVTSIAQSKAVSGKRS.

The signal sequence occupies residues 1-37; that stretch reads MAETDVGSVKGKEKGSGKRWILLIGAIAAVLLAVVVA. N-linked (GlcNAc...) asparagine glycosylation is present at asparagine 44. Disulfide bonds link cysteine 55/cysteine 74, cysteine 57/cysteine 72, cysteine 111/cysteine 371, cysteine 120/cysteine 125, cysteine 221/cysteine 230, and cysteine 374/cysteine 377. FAD is bound by residues arginine 200, threonine 202, and tryptophan 213. FAD contacts are provided by serine 241 and histidine 244. An N-linked (GlcNAc...) asparagine glycan is attached at asparagine 267. Residues arginine 274 and arginine 281 each coordinate FAD. Asparagine 364 carries an N-linked (GlcNAc...) asparagine glycan.

This sequence belongs to the EROs family. In terms of assembly, may function both as a monomer and a homodimer. FAD serves as cofactor. Post-translationally, N-glycosylated.

The protein resides in the endoplasmic reticulum membrane. In terms of biological role, essential oxidoreductase that oxidizes proteins in the endoplasmic reticulum to produce disulfide bonds. Acts by oxidizing directly PDI isomerase through a direct disulfide exchange. Does not act as a direct oxidant of folding substrate, but relies on PDI to transfer oxidizing equivalent. Does not oxidize all PDI related proteins, suggesting that it can discriminate between PDI and related proteins. Its reoxidation probably involves electron transfer to molecular oxygen via FAD. Acts independently of glutathione. May be responsible for a significant proportion of reactive oxygen species (ROS) in the cell, thereby being a source of oxidative stress. The polypeptide is Endoplasmic reticulum oxidoreductin-2 (AERO2) (Arabidopsis thaliana (Mouse-ear cress)).